The sequence spans 219 residues: Holliday junction branch migration complex subunit RuvA (219 aa).

The tract at residues 1–71 (MISWIKGELV…EDSDMLFGFS (71 aa)) is domain I. The domain II stretch occupies residues 72–150 (TKDQRDFFIQ…NKEIEKENLN (79 aa)). The interval 151 to 161 (INNFLEKNKDL) is flexible linker. The segment at 161-219 (LDSIFKDIDLTLQSLNYSKKEIKNLFPKLINNIKNSSLEKESISFENLLKEAMNYLDHK) is domain III.

The protein belongs to the RuvA family. Homotetramer. Forms an RuvA(8)-RuvB(12)-Holliday junction (HJ) complex. HJ DNA is sandwiched between 2 RuvA tetramers; dsDNA enters through RuvA and exits via RuvB. An RuvB hexamer assembles on each DNA strand where it exits the tetramer. Each RuvB hexamer is contacted by two RuvA subunits (via domain III) on 2 adjacent RuvB subunits; this complex drives branch migration. In the full resolvosome a probable DNA-RuvA(4)-RuvB(12)-RuvC(2) complex forms which resolves the HJ.

It is found in the cytoplasm. The RuvA-RuvB-RuvC complex processes Holliday junction (HJ) DNA during genetic recombination and DNA repair, while the RuvA-RuvB complex plays an important role in the rescue of blocked DNA replication forks via replication fork reversal (RFR). RuvA specifically binds to HJ cruciform DNA, conferring on it an open structure. The RuvB hexamer acts as an ATP-dependent pump, pulling dsDNA into and through the RuvAB complex. HJ branch migration allows RuvC to scan DNA until it finds its consensus sequence, where it cleaves and resolves the cruciform DNA. This Prochlorococcus marinus subsp. pastoris (strain CCMP1986 / NIES-2087 / MED4) protein is Holliday junction branch migration complex subunit RuvA.